A 239-amino-acid polypeptide reads, in one-letter code: Ribonuclease HII (239 aa).

The RNase H type-2 domain occupies 30–221 (GPVAGVDEVG…VRRVANGSGG (192 aa)). A divalent metal cation-binding residues include aspartate 36, glutamate 37, and aspartate 130.

The protein belongs to the RNase HII family. Mn(2+) is required as a cofactor. The cofactor is Mg(2+).

Its subcellular location is the cytoplasm. It carries out the reaction Endonucleolytic cleavage to 5'-phosphomonoester.. Endonuclease that specifically degrades the RNA of RNA-DNA hybrids. The sequence is that of Ribonuclease HII from Mycolicibacterium paratuberculosis (strain ATCC BAA-968 / K-10) (Mycobacterium paratuberculosis).